Reading from the N-terminus, the 39-residue chain is RRSLTRRVPEECEESCEEEEKTCCGLENGQPFCSRICWG.

Positions 1 to 5 are excised as a propeptide; that stretch reads RRSLT. Intrachain disulfides connect Cys12–Cys24, Cys16–Cys33, and Cys23–Cys37. A Tryptophan amide modification is found at Trp38.

It belongs to the conotoxin O3 superfamily. Expressed by the venom duct.

It localises to the secreted. The sequence is that of Conotoxin ArMSGL-013 from Conus arenatus (Sand-dusted cone).